We begin with the raw amino-acid sequence, 499 residues long: MDNMNHEELNDQLLVRREKLHNLREQGIDPFGKRFERTNATNDLLSLYGEFSKEELEEKEISVSIAGRIMTKRGKGKAGFAHIQDLHGQVQIYVRKDAVGDEEYELFKTADLGDLVGIEGKVFKTNVGELSVKATGFTLLTKSLRPLPDKYHGLKDVEQRYRQRYLDLITSMESRETFVTRSKIIREMRRYLDDNGYLEVETPMMHAIAGGASARPFITHHNALDMELYMRIAIELHLKRLIVGGLEKVYEIGRVFRNEGVSTRHNPEFTMIELYEAYADYKDIMKLTENMVAHIAKQVLGTTTIQYGDYEINLEPKWTRLHMVDAIKEHSGADFWNPMSVEEARELAKEHNVEIKDTMEVGHIINEFFEQKVEDKLIQPTFIYGHPVEISPLAKKNDEDPRFTDRFELFIVAREHANAFTELNDPIDQKERFEAQLKEREQGNDEAHMMDDDYIEALEYGMPPTGGLGIGIDRLVMLLTNAPSIRDVLLFPAMRHKQD.

Positions 408 and 415 each coordinate Mg(2+).

It belongs to the class-II aminoacyl-tRNA synthetase family. Homodimer. Mg(2+) is required as a cofactor.

The protein resides in the cytoplasm. It catalyses the reaction tRNA(Lys) + L-lysine + ATP = L-lysyl-tRNA(Lys) + AMP + diphosphate. The polypeptide is Lysine--tRNA ligase (Bacillus cereus (strain AH820)).